The following is a 368-amino-acid chain: Aminomethyltransferase (368 aa).

This sequence belongs to the GcvT family. In terms of assembly, the glycine cleavage system is composed of four proteins: P, T, L and H.

The enzyme catalyses N(6)-[(R)-S(8)-aminomethyldihydrolipoyl]-L-lysyl-[protein] + (6S)-5,6,7,8-tetrahydrofolate = N(6)-[(R)-dihydrolipoyl]-L-lysyl-[protein] + (6R)-5,10-methylene-5,6,7,8-tetrahydrofolate + NH4(+). In terms of biological role, the glycine cleavage system catalyzes the degradation of glycine. This chain is Aminomethyltransferase, found in Alkaliphilus oremlandii (strain OhILAs) (Clostridium oremlandii (strain OhILAs)).